The following is an 81-amino-acid chain: Photosystem I iron-sulfur center (81 aa).

4Fe-4S ferredoxin-type domains lie at 2–31 and 39–68; these read AHSV…MVPW and IASA…VRVY. 8 residues coordinate [4Fe-4S] cluster: Cys-11, Cys-14, Cys-17, Cys-21, Cys-48, Cys-51, Cys-54, and Cys-58.

As to quaternary structure, the eukaryotic PSI reaction center is composed of at least 11 subunits. It depends on [4Fe-4S] cluster as a cofactor.

It is found in the plastid. Its subcellular location is the chloroplast thylakoid membrane. It catalyses the reaction reduced [plastocyanin] + hnu + oxidized [2Fe-2S]-[ferredoxin] = oxidized [plastocyanin] + reduced [2Fe-2S]-[ferredoxin]. Functionally, apoprotein for the two 4Fe-4S centers FA and FB of photosystem I (PSI); essential for photochemical activity. FB is the terminal electron acceptor of PSI, donating electrons to ferredoxin. The C-terminus interacts with PsaA/B/D and helps assemble the protein into the PSI complex. Required for binding of PsaD and PsaE to PSI. PSI is a plastocyanin-ferredoxin oxidoreductase, converting photonic excitation into a charge separation, which transfers an electron from the donor P700 chlorophyll pair to the spectroscopically characterized acceptors A0, A1, FX, FA and FB in turn. The polypeptide is Photosystem I iron-sulfur center (Gnetum parvifolium (Small-leaved jointfir)).